A 152-amino-acid chain; its full sequence is Large ribosomal subunit protein uL13 (152 aa).

Belongs to the universal ribosomal protein uL13 family. As to quaternary structure, part of the 50S ribosomal subunit.

In terms of biological role, this protein is one of the early assembly proteins of the 50S ribosomal subunit, although it is not seen to bind rRNA by itself. It is important during the early stages of 50S assembly. This Wolbachia sp. subsp. Drosophila simulans (strain wRi) protein is Large ribosomal subunit protein uL13.